Reading from the N-terminus, the 613-residue chain is Potassium voltage-gated channel subfamily A member 5 (613 aa).

The tract at residues Met1 to Glu108 is disordered. The tetramerization domain stretch occupies residues Met1–Glu211. Residues Met1–Gly247 lie on the Cytoplasmic side of the membrane. Positions Gly45–Ser62 are enriched in basic and acidic residues. A run of 2 repeats spans residues Asp61–Pro71 and Asp72–Pro82. The segment at Asp61–Pro82 is 2 X 11 AA tandem repeat of D-[SP]-G-V-R-P-L-P-P-L-P. Over residues Pro66–Glu83 the composition is skewed to pro residues. A compositionally biased stretch (basic and acidic residues) spans Glu84–Pro93. Residue Lys221 forms a Glycyl lysine isopeptide (Lys-Gly) (interchain with G-Cter in SUMO) linkage. Residues Ser248 to Leu269 form a helical membrane-spanning segment. Residues Glu270–Pro323 lie on the Extracellular side of the membrane. Residues Leu282–Met304 form a disordered region. Residues Pro285–Ala295 are compositionally biased toward pro residues. A helical transmembrane segment spans residues Phe324–Ala345. Cys346 carries the S-palmitoyl cysteine lipid modification. Topologically, residues Cys346–Ile356 are cytoplasmic. A helical transmembrane segment spans residues Met357–Ala377. Residues Glu378–Ser395 are Extracellular-facing. Residues Leu396–His416 traverse the membrane as a helical; Voltage-sensor segment. Residues Ser417–Met431 lie on the Cytoplasmic side of the membrane. An S4-S5 linker region spans residues Lys418–Met431. Residues Arg432–Tyr453 traverse the membrane as a helical segment. At Phe454–Ile467 the chain is on the extracellular side. Residues Pro468–Thr479 constitute an intramembrane region (helical). A Selectivity filter motif is present at residues Thr480–Asp485. The stretch at Thr480–Arg487 is an intramembrane region. Residues Pro488–Lys494 lie on the Extracellular side of the membrane. A helical transmembrane segment spans residues Ile495–Tyr523. The Cytoplasmic segment spans residues His524–Leu613. The segment at Pro532 to Ser559 is disordered. Lys536 participates in a covalent cross-link: Glycyl lysine isopeptide (Lys-Gly) (interchain with G-Cter in SUMO). Ser557 carries the phosphoserine; by PKA modification. Positions Thr611–Leu613 match the PDZ-binding motif.

This sequence belongs to the potassium channel family. A (Shaker) (TC 1.A.1.2) subfamily. Kv1.5/KCNA5 sub-subfamily. In terms of assembly, homotetramer and heterotetramer of potassium channel proteins. Interacts with DLG1, which enhances channel currents. Forms a ternary complex with DLG1 and CAV3. Interacts with KCNAB1. Interacts with UBE2I. Interacts with XIRP2; the interaction is required for normal action potential configuration in the heart. In terms of processing, glycosylated. Post-translationally, sumoylated on Lys-221, and Lys-536, preferentially with SUMO3. Sumoylation regulates the voltage sensitivity of the channel. As to expression, pancreatic islets and insulinoma.

The protein resides in the cell membrane. It catalyses the reaction K(+)(in) = K(+)(out). Its activity is regulated as follows. Inhibited by 4-aminopyridine, nicotine, bepridil, correolide, and endothelin-1. Voltage-gated potassium channel that mediates transmembrane potassium transport in excitable membranes. Forms tetrameric potassium-selective channels through which potassium ions pass in accordance with their electrochemical gradient. The channel alternates between opened and closed conformations in response to the voltage difference across the membrane. Can form functional homotetrameric channels and heterotetrameric channels that contain variable proportions of KCNA1, KCNA2, KCNA4, KCNA5, and possibly other family members as well; channel properties depend on the type of alpha subunits that are part of the channel. Channel properties are modulated by cytoplasmic beta subunits that regulate the subcellular location of the alpha subunits and promote rapid inactivation. Homotetrameric channels display rapid activation and slow inactivation. Required for normal electrical conduction including formation of the infranodal ventricular conduction system and normal action potential configuration, as a result of its interaction with XIRP2. May play a role in regulating the secretion of insulin in normal pancreatic islets. In terms of biological role, exhibits a faster depolarization rate, reduced voltage-dependent recovery from inactivation and an excessive cumulative inactivation. This Homo sapiens (Human) protein is Potassium voltage-gated channel subfamily A member 5 (KCNA5).